The sequence spans 371 residues: 4-hydroxybenzoate polyprenyltransferase, mitochondrial (371 aa).

The transit peptide at 1 to 34 directs the protein to the mitochondrion; that stretch reads MLGSRAAGFARGLRAVALAWLPGWRGRSFALARA. The Mitochondrial matrix portion of the chain corresponds to 35 to 83; sequence AGAPHGGDLQPPACPEPRGRQLSLSAAAVVDSAPRPLQPYLRLMRLDKP. Residues 84–104 form a helical membrane-spanning segment; sequence IGTWLLYLPCTWSIGLAAEPG. At 105–108 the chain is on the mitochondrial intermembrane side; sequence CFPD. The helical transmembrane segment at 109–129 threads the bilayer; the sequence is WYMLSLFGTGAILMRGAGCTI. The Mitochondrial matrix segment spans residues 130 to 148; that stretch reads NDMWDQDYDKKVTRTANRP. Residues 149-169 form a helical membrane-spanning segment; sequence IAAGDISTFQSFVFLGGQLTL. At 170-172 the chain is on the mitochondrial intermembrane side; it reads ALG. Residues 173 to 193 form a helical membrane-spanning segment; it reads VLLCLNYYSIALGAGSLLLVI. Residues 194 to 203 are Mitochondrial matrix-facing; it reads TYPLMKRISY. A helical transmembrane segment spans residues 204 to 224; that stretch reads WPQLALGLTFNWGALLGWSAI. Residues 225 to 231 are Mitochondrial intermembrane-facing; sequence KGSCDPS. The chain crosses the membrane as a helical span at residues 232-252; that stretch reads VCLPLYFSGVMWTLIYDTIYA. Over 253-277 the chain is Mitochondrial matrix; the sequence is HQDKRDDVLIGLKSTALRFGENTKP. Residues 278 to 298 traverse the membrane as a helical segment; it reads WLSGFSVAMLGALSLVGVNSG. Topologically, residues 299-300 are mitochondrial intermembrane; the sequence is QT. A helical transmembrane segment spans residues 301-321; sequence APYYAALGAVGAHLTHQIYTL. Residues 322 to 332 are Mitochondrial matrix-facing; that stretch reads DIHRPEDCWNK. A helical transmembrane segment spans residues 333–353; it reads FISNRTLGLIVFLGIVLGNLW. At 354–371 the chain is on the mitochondrial intermembrane side; sequence KEKKTDKTKKGIENKIEN.

The protein belongs to the UbiA prenyltransferase family. Mg(2+) serves as cofactor. Widely expressed. Present in all of the tissues tested. Expressed at higher level in skeletal muscle, adrenal glands and the heart.

It localises to the mitochondrion inner membrane. The enzyme catalyses an all-trans-polyprenyl diphosphate + 4-hydroxybenzoate = a 4-hydroxy-3-(all-trans-polyprenyl)benzoate + diphosphate. It carries out the reaction all-trans-decaprenyl diphosphate + 4-hydroxybenzoate = 4-hydroxy-3-(all-trans-decaprenyl)benzoate + diphosphate. The catalysed reaction is all-trans-nonaprenyl diphosphate + 4-hydroxybenzoate = 4-hydroxy-3-(all-trans-nonaprenyl)benzoate + diphosphate. It functions in the pathway cofactor biosynthesis; ubiquinone biosynthesis. In terms of biological role, mediates the second step in the final reaction sequence of coenzyme Q (CoQ) biosynthesis. Catalyzes the prenylation of para-hydroxybenzoate (PHB) with an all-trans polyprenyl donor (such as all-trans-decaprenyl diphosphate). The length of the polyprenyl side chain varies depending on the species, in humans, the side chain is comprised of 10 isoprenyls (decaprenyl) producing CoQ10 (also known as ubiquinone), whereas rodents predominantly generate CoQ9. However, this specificity is not complete, human tissues have low amounts of CoQ9 and rodent organs contain some CoQ10. Plays a central role in the biosynthesis of CoQ10. CoQ10 is a vital molecule that transports electrons from mitochondrial respiratory chain complexes. CoQs also function as cofactors for uncoupling protein and play a role as regulators of the extracellularly-induced ceramide-dependent apoptotic pathway. Regulates mitochondrial permeability transition pore (mPTP) opening and ROS production (pivotal events in cell death) in a tissue specific manner. The chain is 4-hydroxybenzoate polyprenyltransferase, mitochondrial from Homo sapiens (Human).